Consider the following 248-residue polypeptide: Triosephosphate isomerase (248 aa).

Substrate contacts are provided by asparagine 11 and lysine 13. Histidine 95 (electrophile) is an active-site residue. Residue glutamate 165 is the Proton acceptor of the active site.

Belongs to the triosephosphate isomerase family. In terms of assembly, homodimer.

Its subcellular location is the cytoplasm. The catalysed reaction is dihydroxyacetone phosphate = methylglyoxal + phosphate. The enzyme catalyses D-glyceraldehyde 3-phosphate = dihydroxyacetone phosphate. The protein operates within carbohydrate degradation; glycolysis; D-glyceraldehyde 3-phosphate from glycerone phosphate: step 1/1. It participates in carbohydrate biosynthesis; gluconeogenesis. In terms of biological role, triosephosphate isomerase is an extremely efficient metabolic enzyme that catalyzes the interconversion between dihydroxyacetone phosphate (DHAP) and D-glyceraldehyde-3-phosphate (G3P) in glycolysis and gluconeogenesis. Functionally, it is also responsible for the non-negligible production of methylglyoxal a reactive cytotoxic side-product that modifies and can alter proteins, DNA and lipids. The polypeptide is Triosephosphate isomerase (TPI1) (Gallus gallus (Chicken)).